We begin with the raw amino-acid sequence, 1004 residues long: MAKQEQAPDRANDVFALTSFLYGGNADYIEELYAKYEDDPNSVDPQWRDFFAKLGDNADDVKKNAEGPSWTRKNWPIAANGELVSALDGNWAEVEKHVTDKLKGKAAKGEAKGAAGTPLTAEEITQAARDSVRAIMMIRAYRMRGHLHANLDPLGLAEKPNDYNELEPENYGFTPADYNRKIFIDNVLGLEYATVPEMLDILKRTYCGAIGVEFMHISDPAEKAWIQERIEGPDKKVAFTPEGKKAILSKLIEAEGFEQFIDVKYKGTKRFGLDGGESLIPALEQIVKRGGQMGLKEVVLGMAHRGRLNVLSQVMGKPHRAIFHEFKGGSYTPDDVEGSGDVKYHLGASSDREFDGNKVHLSLTANPSHLEIVNPVVMGKARAKQDLLVGRTRDDMVPLSERAKVLPLLLHGDAAFAGQGVVAECLGLSGLKGHRVAGTLHFIINNQIGFTTNPAFSRSSPYPSDVAKMIEAPIFHVNGDDPEAVVFAAKVATEFRMTFHKPVVIDMFCYRRFGHNEGDEPSFTQPLMYKAIRAHKTTVQLYGEKLIAEGLVTQDDIDRMKADWRQKLEGEFEAGQSYKPNKADWLDGAWAGLRTADNADEQRRGKTAVPVKTLKEIGKKLVEVPKDFHVHRTIQRFLDNRAKMMETGEGIDWATAESLAFGSLAVEGHPIRLSGQDVERGTFSQRHTVLYDQENQNRYIPLNNLQKGQAIYEAINSMLSEEAVLGYEYGYSLSDPRALVLWEAQFGDFANGAQVVFDQFISSGERKWLRMSGLVCLLPHGFEGQGPEHSSARLERYLQLCAEDNMQVANVTTPANYFHILRRQMKRDFRKPLIMMTPKSLLRHKRAISTLAELSGESSFHRLLWDDARYNKDKGIKLQKDAKIRRVVLCSGKVYYDLYEEREKRGIDDVYLLRVEQLYPFPAKALINELSRFRHAEMVWCQEEPKNMGAWSFIDPYLEWVLAHIDAKHQRVRYAGRPAAASPATGLMSKHLAQLAAFLEDALG.

It belongs to the alpha-ketoglutarate dehydrogenase family. In terms of assembly, homodimer. Part of the 2-oxoglutarate dehydrogenase (OGDH) complex composed of E1 (2-oxoglutarate dehydrogenase), E2 (dihydrolipoamide succinyltransferase) and E3 (dihydrolipoamide dehydrogenase); the complex contains multiple copies of the three enzymatic components (E1, E2 and E3). The cofactor is thiamine diphosphate.

It catalyses the reaction N(6)-[(R)-lipoyl]-L-lysyl-[protein] + 2-oxoglutarate + H(+) = N(6)-[(R)-S(8)-succinyldihydrolipoyl]-L-lysyl-[protein] + CO2. Functionally, E1 component of the 2-oxoglutarate dehydrogenase (OGDH) complex which catalyzes the decarboxylation of 2-oxoglutarate, the first step in the conversion of 2-oxoglutarate to succinyl-CoA and CO(2). This is 2-oxoglutarate dehydrogenase E1 component from Brucella abortus (strain S19).